Here is a 298-residue protein sequence, read N- to C-terminus: uncharacterized protein (298 aa).

The region spanning 5–62 (TSLSAMRIFEAAARLGSFRAAAEELNLSPSAVSHAIMRLERDLGVALFERTTRSVSLT) is the HTH lysR-type domain. The H-T-H motif DNA-binding region spans 22 to 42 (FRAAAEELNLSPSAVSHAIMR).

It belongs to the LysR transcriptional regulatory family.

This is an uncharacterized protein from Sinorhizobium fredii (strain NBRC 101917 / NGR234).